The primary structure comprises 181 residues: MGLSFTKLFSRLFAKKEMRILMVGLDAAGKTTILYKLKLGEIVTTIPTIGFNVETVEYKNISFTVWDVGGQDKIRPLWRHYFQNTQGLIFVVDSNDRDRVVEARDELHRMLNEDELRDAVLLVFANKQDLPNAMNAAEIIDKLGLHSLRQRHWYIQSTCATSGEGLYEGLDWLSNNIASKS.

The N-myristoyl glycine moiety is linked to residue glycine 2. GTP contacts are provided by residues glycine 24 to threonine 31, aspartate 67 to glutamine 71, and asparagine 126 to aspartate 129.

The protein belongs to the small GTPase superfamily. Arf family.

It is found in the golgi apparatus. The enzyme catalyses GTP + H2O = GDP + phosphate + H(+). Its function is as follows. GTP-binding protein involved in protein trafficking; may modulate vesicle budding and uncoating within the Golgi apparatus. The sequence is that of ADP-ribosylation factor 1 (ARF1) from Daucus carota (Wild carrot).